Consider the following 312-residue polypeptide: TATA box-binding protein-like 2 (312 aa).

The interval 65-115 (DELSTQDEPSQVEKESKNEDSGIYTDCPQKESTQADIDTSNSAQNTSQFNL) is disordered. Over residues 75 to 84 (QVEKESKNED) the composition is skewed to basic and acidic residues. Positions 94-115 (KESTQADIDTSNSAQNTSQFNL) are enriched in polar residues.

The protein belongs to the TBP family. As to expression, in adults, expressed in the gonads, with expression much higher in the ovary than the testis (at protein level). Shows a small amount of expression in other adult organs, including the brain and kidney. Embryonic expression is mostly ubiquitous except in early gastrula embryos where expression is asymmetric.

The protein resides in the nucleus. Functionally, TATA box-binding transcription factor. Members of the TBP family are differentially required to regulate transcription and development during early embryogenesis. Commits mesoderm to the hematopoietic lineage during hemopoiesis, acting via mespa. Binds to the mespa promoter. The polypeptide is TATA box-binding protein-like 2 (Danio rerio (Zebrafish)).